The sequence spans 61 residues: Small ribosomal subunit protein uS14 (61 aa).

Residues Cys-24, Cys-27, Cys-40, and Cys-43 each coordinate Zn(2+).

This sequence belongs to the universal ribosomal protein uS14 family. Zinc-binding uS14 subfamily. Part of the 30S ribosomal subunit. Contacts proteins S3 and S10. Zn(2+) is required as a cofactor.

Its function is as follows. Binds 16S rRNA, required for the assembly of 30S particles and may also be responsible for determining the conformation of the 16S rRNA at the A site. This Mycoplasma capricolum subsp. capricolum (strain California kid / ATCC 27343 / NCTC 10154) protein is Small ribosomal subunit protein uS14.